The primary structure comprises 228 residues: MKSTRPFHPTPVITIDGPTASGKGTVAALVAAHLGFHLLDSGALYRLAALASVRYGIAAEDIDALVKLIDDLHITFREGCAQLDGVDVSNDIRAEAVGNRASAIAVHGPVRTALVARQRAFRKTPGLVADGRDMGTVIFPDAVLKVFLTASAEARATRRHKQLMQKGFSANIDDLLRDLRERDARDSNRAAAPLKPAADAKLLDTSALSVDEAVDQVLQWYRALGQPA.

17 to 25 serves as a coordination point for ATP; sequence GPTASGKGT.

This sequence belongs to the cytidylate kinase family. Type 1 subfamily.

It localises to the cytoplasm. It carries out the reaction CMP + ATP = CDP + ADP. The catalysed reaction is dCMP + ATP = dCDP + ADP. The sequence is that of Cytidylate kinase from Burkholderia cenocepacia (strain HI2424).